Consider the following 1135-residue polypeptide: MPRSTPVASEQVDFVMKLLGNTTKQITTATYIKLAWAVVISCNTGSNDTVFGITVNGRGAPIDGAGEMTGATIATIPQHGCILRVWSLPRMPAGMISRERVQRLLQHLELVLQDLMADPSCKVGDLPRMSRQEWDQIQRWSGTLPPVSRQCVHEIVNQRSLQFPNACAVSAPDGDLSYAELIRSANAVAAELLVHGVERGNYIPVLFEKCKWSPVAMLGVLKAGAAFVLLDSSYPPQRLHTICGGLKTQIILCSKDMYARAASLGPTAIAIHENAAFLADIPDVTFPVVSPENAAYVVFTSGSTGTPKGAVIDHQSYCSGALAHNRAHVLGRNSRVLQYASYAFDVSIMETLSTLMAGGCVCILSDLERHDHFANSVQRLAVTHAFLTPSTARLLMQRELPSLCVLVLGGEAMSLADRSYWMSRVRLMNEYGIAECSVASTIREVSHVEQKDIGFPMGVVAWVVDQNDHEKLVAIGATGELLLEGPSPPVGRSSSNRAGSGRCAMGSQAGSYKTGDLVRYNEDGSLSFISRKDSQIKIRGQRFELEEVEQHLRRIDEIQEATTVVAAPSDRPKQPYLVAFIVPRARESFCVCSARALIPHPTEEFRLQAATIQTKLHSILPAHMVPAIYLPVNRMPKTSSDKIDRCRLKEEVGKWSWSDLRAYSVSSMSHRAPSNRVEQDLQRVWEQILGILLDSVGVEDSFFHLGGDSIIAMQVVAEARSRGLDHSVQDINQLKTIKAIANKIGDVQRAAIKLVQNHAMLRARYVRQKDGAWKQFFTGYTEQCFRFSVHQVKSAQEMRQIIGESQTSLNPEHGPVFTVDLFHHGGEQSLLMIGHHLVLDLVSWRIILADMEAMILDPQHQPHLTMSFQTWAHLQAEYGTRHLEPPPGQQPCSIDEPSMRQFWGAENNANTGGDSKTRLIRMNDDLTRKLFGPSSQALDVEPVELLHAAILFSFVNTFPQRPALVIFGEAHGRETWDSSVDVTRTIGWFTTLWPVVAQVNPSDSLETVARTVRQARRAMDMHGWTHFTSVYHNTRQTKRSAGAHLMEITFNYAGKFQQVEQDGSLFRMEPMAKQNLFDGAAELGRWAMLEINSVILNGLLEFHVPYNRGTDEARVLTPWMDNLVKCLEGLASGFA.

The segment at 23–77 (TKQITTATYIKLAWAVVISCNTGSNDTVFGITVNGRGAPIDGAGEMTGATIATIP) is condensation 1. An adenylation region spans residues 177-562 (SYAELIRSAN…RRIDEIQEAT (386 aa)). A disordered region spans residues 485 to 507 (GPSPPVGRSSSNRAGSGRCAMGS). Residues 491-502 (GRSSSNRAGSGR) are compositionally biased toward low complexity. Positions 672 to 748 (APSNRVEQDL…AIANKIGDVQ (77 aa)) constitute a Carrier domain. Ser709 bears the O-(pantetheine 4'-phosphoryl)serine mark. The tract at residues 746–999 (DVQRAAIKLV…TTLWPVVAQV (254 aa)) is condensation 2.

Belongs to the NRP synthetase family.

Functionally, nonribosomal peptide synthesis (NRPS) is a key mechanism responsible for the biosynthesis of bioactive metabolites which are potentially contributing to organismal virulence. The chain is Nonribosomal peptide synthetase 9 (NRPS9) from Aspergillus fumigatus (strain ATCC MYA-4609 / CBS 101355 / FGSC A1100 / Af293) (Neosartorya fumigata).